We begin with the raw amino-acid sequence, 163 residues long: Photosystem II extrinsic protein V (163 aa).

Residues 1–26 form the signal peptide; it reads MFKKSSQLFSLVFFTIFSIFIGTASA. C63, C66, H67, and M130 together coordinate heme c.

This sequence belongs to the cytochrome c family. PsbV subfamily. PSII is composed of 1 copy each of membrane proteins PsbA, PsbB, PsbC, PsbD, PsbE, PsbF, PsbH, PsbI, PsbJ, PsbK, PsbL, PsbM, PsbT, PsbY, PsbZ, Psb30/Ycf12, at least 3 peripheral proteins of the oxygen-evolving complex and a large number of cofactors. It forms dimeric complexes. It depends on heme c as a cofactor.

The protein resides in the plastid. It is found in the chloroplast thylakoid membrane. One of the extrinsic, lumenal subunits of photosystem II (PSII). PSII is a light-driven water plastoquinone oxidoreductase, using light energy to abstract electrons from H(2)O, generating a proton gradient subsequently used for ATP formation. The extrinsic proteins stabilize the structure of photosystem II oxygen-evolving complex (OEC), the ion environment of oxygen evolution and protect the OEC against heat-induced inactivation. The chain is Photosystem II extrinsic protein V from Phaeodactylum tricornutum (strain CCAP 1055/1).